Reading from the N-terminus, the 386-residue chain is Aspartate carbamoyltransferase 1, chloroplastic (386 aa).

The transit peptide at 1-39 (MTVASMLSSNSMNVGVSNPKMSSKTSACCLLNRPWPSSC) directs the protein to the chloroplast. Arg132 and Thr133 together coordinate carbamoyl phosphate. The UMP site is built by Arg132 and Thr133. Position 162 (Lys162) interacts with L-aspartate. 3 residues coordinate carbamoyl phosphate: Arg183, His211, and Gln214. Positions 183 and 211 each coordinate UMP. Residues Arg244 and Arg306 each coordinate UMP. The L-aspartate site is built by Arg244 and Arg306. Carbamoyl phosphate is bound by residues Leu346 and Pro347.

Belongs to the aspartate/ornithine carbamoyltransferase superfamily. ATCase family. Homotrimer.

The protein localises to the plastid. It localises to the chloroplast. The enzyme catalyses carbamoyl phosphate + L-aspartate = N-carbamoyl-L-aspartate + phosphate + H(+). Its pathway is pyrimidine metabolism; UMP biosynthesis via de novo pathway; (S)-dihydroorotate from bicarbonate: step 2/3. Feedback inhibited by UMP. Catalyzes the condensation of carbamoyl phosphate and aspartate to form carbamoyl aspartate and inorganic phosphate, the committed step in the de novo pyrimidine nucleotide biosynthesis pathway. This is Aspartate carbamoyltransferase 1, chloroplastic (PYRB1) from Pisum sativum (Garden pea).